A 66-amino-acid chain; its full sequence is M-poneratoxin-Dq3a (66 aa).

A signal peptide spans 1-23; sequence MKLSALSIIFGMILVMTIMYTKA. The propeptide occupies 24 to 43; sequence EAEAEAEADADADAKAEAEA.

Belongs to the non-disulfide-bridged peptide (NDBP) superfamily. Medium-length antimicrobial peptide (group 3) family. Ponericin-W subfamily. Expressed by the venom gland.

It localises to the secreted. It is found in the target cell membrane. In terms of biological role, may have antimicrobial properties by disrupting the integrity of the bacterial cell membrane. In addition, when tested in vitro on the parasite Trypanosoma cruzi (responsible of the Chagas disease), is able to potently reduce the number of the three forms (epimastigote, trypomastigote and amastigote) by inducing cell death through necrosis. Functionally, may have antimicrobial properties by disrupting the integrity of the bacterial cell membrane. In addition, when tested in vitro on the parasite Trypanosoma cruzi (responsible of the Chagas disease), is able to moderately reduce the number of the forms epimastigote and trypomastigote. Its activity on the amastigote form has not been tested. Its function is as follows. May have antimicrobial properties by disrupting the integrity of the bacterial cell membrane. In addition, when tested in vitro on the parasite Trypanosoma cruzi (responsible of the Chagas disease), shows only a weak reduction of the number of the trypomastigote forms. Has no activity on the epimastigote forms. Its activity on the amastigote form has not been tested. The polypeptide is M-poneratoxin-Dq3a (Dinoponera quadriceps (South American ant)).